The chain runs to 321 residues: Methenyltetrahydromethanopterin cyclohydrolase (321 aa).

It belongs to the MCH family.

Its subcellular location is the cytoplasm. It carries out the reaction 5,10-methenyl-5,6,7,8-tetrahydromethanopterin + H2O = N(5)-formyl-5,6,7,8-tetrahydromethanopterin + H(+). Its pathway is one-carbon metabolism; methanogenesis from CO(2); 5,10-methenyl-5,6,7,8-tetrahydromethanopterin from CO(2): step 3/3. Its function is as follows. Catalyzes the reversible interconversion of 5-formyl-H(4)MPT to methenyl-H(4)MPT(+). The sequence is that of Methenyltetrahydromethanopterin cyclohydrolase from Methanosarcina mazei (strain ATCC BAA-159 / DSM 3647 / Goe1 / Go1 / JCM 11833 / OCM 88) (Methanosarcina frisia).